Here is an 88-residue protein sequence, read N- to C-terminus: Small ribosomal subunit protein bS20 (88 aa).

This sequence belongs to the bacterial ribosomal protein bS20 family.

Binds directly to 16S ribosomal RNA. This chain is Small ribosomal subunit protein bS20, found in Bacillus licheniformis (strain ATCC 14580 / DSM 13 / JCM 2505 / CCUG 7422 / NBRC 12200 / NCIMB 9375 / NCTC 10341 / NRRL NRS-1264 / Gibson 46).